We begin with the raw amino-acid sequence, 287 residues long: Maleylpyruvate hydrolase (287 aa).

Positions 143, 145, and 174 each coordinate a divalent metal cation.

This sequence belongs to the FAH family. As to quaternary structure, homodimer.

It catalyses the reaction 3-maleylpyruvate + H2O = maleate + pyruvate + H(+). Its activity is regulated as follows. Activated by Mn(2+). Inhibited by Ni(2+), Cd(2+), Co(2+) or Cu(2+). Functionally, involved in the degradation of gentisate. Catalyzes the hydrolysis of 3-maleylpyruvate, the ring-cleavage product of gentisate. This chain is Maleylpyruvate hydrolase, found in Aquipseudomonas alcaligenes (Pseudomonas alcaligenes).